Here is a 188-residue protein sequence, read N- to C-terminus: UPF0461 protein C5orf24 (188 aa).

The segment covering Met1–Pro10 has biased composition (polar residues). Residues Met1–Cys20 are disordered. Ser37 bears the Phosphoserine mark. Lys75 participates in a covalent cross-link: Glycyl lysine isopeptide (Lys-Gly) (interchain with G-Cter in SUMO2). The interval Lys79–Pro142 is disordered. Positions Lys80–Arg92 are enriched in basic residues. The span at Ser94 to Gly107 shows a compositional bias: polar residues. Phosphoserine is present on residues Ser121 and Ser180. Lys184 participates in a covalent cross-link: Glycyl lysine isopeptide (Lys-Gly) (interchain with G-Cter in SUMO2).

It belongs to the UPF0461 family.

The chain is UPF0461 protein C5orf24 (C5orf24) from Homo sapiens (Human).